The following is a 346-amino-acid chain: Tubulin-specific chaperone C (346 aa).

Methionine 1 carries the post-translational modification N-acetylmethionine. The tract at residues methionine 1 to proline 26 is disordered. Serine 80 and serine 168 each carry phosphoserine. The tract at residues lysine 140–proline 171 is disordered. Positions proline 171 to tryptophan 323 constitute a C-CAP/cofactor C-like domain.

The protein belongs to the TBCC family. Supercomplex made of cofactors A to E. Cofactors A and D function by capturing and stabilizing tubulin in a quasi-native conformation. Cofactor E binds to the cofactor D-tubulin complex; interaction with cofactor C then causes the release of tubulin polypeptides that are committed to the native state. In terms of tissue distribution, expressed in the retina. Expressed in the rod and cone photoreceptors, extending from the inner segments (IS), through the outer nuclear layer (ONL) and into the synapses in the outer plexiform layer (OPL). Strongly expressed to the photoreceptor connecting cilium at the tips of the IS (at protein level).

It is found in the cytoplasm. Its function is as follows. Tubulin-folding protein; involved in the final step of the tubulin folding pathway. This Homo sapiens (Human) protein is Tubulin-specific chaperone C (TBCC).